We begin with the raw amino-acid sequence, 315 residues long: Olfactory receptor 5M10 (315 aa).

Residues 1–25 are Extracellular-facing; the sequence is MLSPNHTIVTEFILLGLTDDPVLEK. An N-linked (GlcNAc...) asparagine glycan is attached at Asn-5. Residues 26–46 form a helical membrane-spanning segment; the sequence is ILFGVFLAIYLITLAGNLCMI. Residues 47 to 54 lie on the Cytoplasmic side of the membrane; that stretch reads LLIRTNSQ. Residues 55–75 traverse the membrane as a helical segment; that stretch reads LQTPMYFFLGHLSFVDICYSS. Residues 76–99 are Extracellular-facing; the sequence is NVTPNMLHNFLSEQKTISYAGCFT. Cysteines 97 and 189 form a disulfide. Residues 100 to 120 traverse the membrane as a helical segment; sequence QCLLFIALVITEFYFLASMAL. Residues 121 to 139 are Cytoplasmic-facing; the sequence is DRYVAICSPLHYSSRMSKN. The helical transmembrane segment at 140-160 threads the bilayer; sequence ICISLVTVPYMYGFLNGLSQT. The Extracellular portion of the chain corresponds to 161 to 196; the sequence is LLTFHLSFCGSLEINHFYCADPPLIMLACSDTRVKK. A helical membrane pass occupies residues 197–217; it reads MAMFVVAGFTLSSSLFIILLS. The Cytoplasmic portion of the chain corresponds to 218–237; sequence YLFIFAAIFRIRSAEGRHKA. A helical transmembrane segment spans residues 238–258; sequence FSTCASHLTIVTLFYGTLFCM. Residues 259–271 are Extracellular-facing; it reads YVRPPSEKSVEES. The helical transmembrane segment at 272-292 threads the bilayer; sequence KIIAVFYTFLSPMLNPLIYSL. The Cytoplasmic portion of the chain corresponds to 293–315; sequence RNRDVILAIQQMIRGKSFCKIAV.

The protein belongs to the G-protein coupled receptor 1 family.

It localises to the cell membrane. In terms of biological role, odorant receptor. This chain is Olfactory receptor 5M10 (OR5M10), found in Homo sapiens (Human).